Reading from the N-terminus, the 162-residue chain is Phosphopantetheine adenylyltransferase (162 aa).

Serine 9 is a binding site for substrate. Residues 9–10 and histidine 17 each bind ATP; that span reads SF. The substrate site is built by lysine 41, threonine 73, and arginine 87. Residues 88 to 90, glutamate 98, and 122 to 128 contribute to the ATP site; these read GLR and NQNISSS.

Belongs to the bacterial CoaD family. In terms of assembly, homohexamer. The cofactor is Mg(2+).

The protein localises to the cytoplasm. The enzyme catalyses (R)-4'-phosphopantetheine + ATP + H(+) = 3'-dephospho-CoA + diphosphate. Its pathway is cofactor biosynthesis; coenzyme A biosynthesis; CoA from (R)-pantothenate: step 4/5. Functionally, reversibly transfers an adenylyl group from ATP to 4'-phosphopantetheine, yielding dephospho-CoA (dPCoA) and pyrophosphate. This chain is Phosphopantetheine adenylyltransferase, found in Leuconostoc mesenteroides subsp. mesenteroides (strain ATCC 8293 / DSM 20343 / BCRC 11652 / CCM 1803 / JCM 6124 / NCDO 523 / NBRC 100496 / NCIMB 8023 / NCTC 12954 / NRRL B-1118 / 37Y).